A 569-amino-acid chain; its full sequence is MKKISRKEYVSMYGPTTGDKVRLGDTDLIAEVEHDYTIYGEELKFGGGKTLREGMSQSNNPSKEELDLIITNALIVDYTGIYKADIGIKDGKIAGIGKGGNKDMQDGVKNNLSVGPATEALAGEGLIVTAGGIDTHIHFISPQQIPTAFASGVTTMIGGGTGPADGTNATTITPGRRNLKWMLRAAEEYSMNLGFLAKGNTSNDASLADQIEAGAIGFKIHEDWGTTPSAINHALDVADKYDVQVAIHTDTLNEAGCVEDTMAAIAGRTMHTFHTEGAGGGHAPDIIKVAGEHNILPASTNPTIPFTVNTEAEHMDMLMVCHHLDKSIKEDVQFADSRIRPQTIAAEDTLHDMGIFSITSSDSQAMGRVGEVITRTWQTADKNKKEFGRLKEEKGDNDNFRIKRYLSKYTINPAIAHGISEYVGSVEVGKVADLVLWSPAFFGVKPNMIIKGGFIALSQMGDANASIPTPQPVYYREMFAHHGKAKYDANITFVSQAAYDKGIKEELGLERQVLPVKNCRNITKKDMQFNDTTAHIEVNPETYHVFVDGKEVTSKPANKVSLAQLFSIF.

Positions 131 to 569 (GGIDTHIHFI…VSLAQLFSIF (439 aa)) constitute a Urease domain. Positions 136, 138, and 219 each coordinate Ni(2+). An N6-carboxylysine modification is found at Lys-219. His-221 contacts substrate. 2 residues coordinate Ni(2+): His-248 and His-274. Catalysis depends on His-322, which acts as the Proton donor. Asp-362 contacts Ni(2+).

This sequence belongs to the metallo-dependent hydrolases superfamily. Urease alpha subunit family. In terms of assembly, heterohexamer of 3 UreA (alpha) and 3 UreB (beta) subunits. Ni cation is required as a cofactor. In terms of processing, carboxylation allows a single lysine to coordinate two nickel ions.

It localises to the cytoplasm. It catalyses the reaction urea + 2 H2O + H(+) = hydrogencarbonate + 2 NH4(+). The protein operates within nitrogen metabolism; urea degradation; CO(2) and NH(3) from urea (urease route): step 1/1. The sequence is that of Urease subunit beta from Helicobacter pylori (strain P12).